A 131-amino-acid polypeptide reads, in one-letter code: ATP synthase epsilon chain (131 aa).

This sequence belongs to the ATPase epsilon chain family. In terms of assembly, F-type ATPases have 2 components, CF(1) - the catalytic core - and CF(0) - the membrane proton channel. CF(1) has five subunits: alpha(3), beta(3), gamma(1), delta(1), epsilon(1). CF(0) has three main subunits: a, b and c.

Its subcellular location is the cell membrane. Produces ATP from ADP in the presence of a proton gradient across the membrane. This chain is ATP synthase epsilon chain, found in Bacillus pumilus (strain SAFR-032).